We begin with the raw amino-acid sequence, 232 residues long: Flagellar L-ring protein (232 aa).

The first 21 residues, 1 to 21, serve as a signal peptide directing secretion; it reads MQKYALHAYPVMALMVATLTG. The N-palmitoyl cysteine moiety is linked to residue Cys22. Residue Cys22 is the site of S-diacylglycerol cysteine attachment.

Belongs to the FlgH family. As to quaternary structure, the basal body constitutes a major portion of the flagellar organelle and consists of four rings (L,P,S, and M) mounted on a central rod.

The protein resides in the cell outer membrane. It is found in the bacterial flagellum basal body. Functionally, assembles around the rod to form the L-ring and probably protects the motor/basal body from shearing forces during rotation. This chain is Flagellar L-ring protein, found in Salmonella choleraesuis (strain SC-B67).